The primary structure comprises 607 residues: UvrABC system protein C (607 aa).

Residues 16–94 (GRPGVYRMFD…IKEWRPPYNI (79 aa)) form the GIY-YIG domain. A UVR domain is found at 203 to 238 (NALTDELSGAMEQAASTLDFERAAELRDQISLLRRV).

It belongs to the UvrC family. As to quaternary structure, interacts with UvrB in an incision complex.

The protein localises to the cytoplasm. Functionally, the UvrABC repair system catalyzes the recognition and processing of DNA lesions. UvrC both incises the 5' and 3' sides of the lesion. The N-terminal half is responsible for the 3' incision and the C-terminal half is responsible for the 5' incision. This chain is UvrABC system protein C, found in Pseudomonas fluorescens (strain SBW25).